The chain runs to 143 residues: Large ribosomal subunit protein uL11 (143 aa).

The protein belongs to the universal ribosomal protein uL11 family. Part of the ribosomal stalk of the 50S ribosomal subunit. Interacts with L10 and the large rRNA to form the base of the stalk. L10 forms an elongated spine to which L12 dimers bind in a sequential fashion forming a multimeric L10(L12)X complex. In terms of processing, one or more lysine residues are methylated.

Functionally, forms part of the ribosomal stalk which helps the ribosome interact with GTP-bound translation factors. The protein is Large ribosomal subunit protein uL11 of Teredinibacter turnerae (strain ATCC 39867 / T7901).